We begin with the raw amino-acid sequence, 341 residues long: L-threonine 3-dehydrogenase (341 aa).

Residue Cys38 coordinates Zn(2+). Active-site charge relay system residues include Thr40 and His43. Residues His63, Glu64, Cys93, Cys96, Cys99, and Cys107 each contribute to the Zn(2+) site. NAD(+)-binding positions include Ile175, Asp195, Arg200, 262-264, and 286-287; these read LGI and IY.

Belongs to the zinc-containing alcohol dehydrogenase family. In terms of assembly, homotetramer. It depends on Zn(2+) as a cofactor.

The protein resides in the cytoplasm. The catalysed reaction is L-threonine + NAD(+) = (2S)-2-amino-3-oxobutanoate + NADH + H(+). It functions in the pathway amino-acid degradation; L-threonine degradation via oxydo-reductase pathway; glycine from L-threonine: step 1/2. Catalyzes the NAD(+)-dependent oxidation of L-threonine to 2-amino-3-ketobutyrate. The protein is L-threonine 3-dehydrogenase of Cronobacter sakazakii (strain ATCC BAA-894) (Enterobacter sakazakii).